Here is a 138-residue protein sequence, read N- to C-terminus: Large ribosomal subunit protein mL54 (138 aa).

Residues 1–14 constitute a mitochondrion transit peptide; it reads MATKRLFGATRTWA.

Belongs to the mitochondrion-specific ribosomal protein mL54 family. In terms of assembly, component of the mitochondrial large ribosomal subunit (mt-LSU). Mature mammalian 55S mitochondrial ribosomes consist of a small (28S) and a large (39S) subunit. The 28S small subunit contains a 12S ribosomal RNA (12S mt-rRNA) and 30 different proteins. The 39S large subunit contains a 16S rRNA (16S mt-rRNA), a copy of mitochondrial valine transfer RNA (mt-tRNA(Val)), which plays an integral structural role, and 52 different proteins.

It is found in the mitochondrion. The polypeptide is Large ribosomal subunit protein mL54 (MRPL54) (Homo sapiens (Human)).